The chain runs to 41 residues: ORF3c protein (41 aa).

In terms of biological role, may play a role in host modulation. This is ORF3c protein from Severe acute respiratory syndrome coronavirus 2 (2019-nCoV).